The sequence spans 519 residues: Histidine--tRNA ligase (519 aa).

This sequence belongs to the class-II aminoacyl-tRNA synthetase family. Homodimer.

It is found in the cytoplasm. It carries out the reaction tRNA(His) + L-histidine + ATP = L-histidyl-tRNA(His) + AMP + diphosphate + H(+). This chain is Histidine--tRNA ligase, found in Roseobacter denitrificans (strain ATCC 33942 / OCh 114) (Erythrobacter sp. (strain OCh 114)).